We begin with the raw amino-acid sequence, 331 residues long: MENLKQILADALSAVAASESESALDDVRVHYLGKKGALTALLKQLGNVSAEDRPKFGQMVNEAKDQVQEKITERKASLAKAALDAKLATETIDISLSGKGQEVGGLHPVTRTMERIETFFRGIGFDVASGPEIEDDYHNFEALNIPAHHPARAMQDTFYFNPSTVLRTHTSPVQVRTMETTQPPIRIICPGRVYRCDSDQTHTPMFHQVEGLLIDENISFADLKGILQQFLNVFFEDDLKVRFRPSYFPFTEPSIEVDIMRTNSKGEESWLEVLGCGMVHPKVLEMSGIDSEKYTGFAFGMGVERFAMLRYKVDDLRMFFENDLRFLKQFK.

Residue E252 coordinates Mg(2+).

It belongs to the class-II aminoacyl-tRNA synthetase family. Phe-tRNA synthetase alpha subunit type 1 subfamily. Tetramer of two alpha and two beta subunits. Requires Mg(2+) as cofactor.

The protein localises to the cytoplasm. It catalyses the reaction tRNA(Phe) + L-phenylalanine + ATP = L-phenylalanyl-tRNA(Phe) + AMP + diphosphate + H(+). This Marinomonas sp. (strain MWYL1) protein is Phenylalanine--tRNA ligase alpha subunit.